Here is a 213-residue protein sequence, read N- to C-terminus: MVLSTLIMRASDGLPLSASVDDGQENLSEQKKQCKLVTQKLSANSADRASIESGNYVIHYLMKDGIVYYCISESSYPRKLAFSYLDELDREFQKSHGQEALKEGVRPYKFVEFDTFMQKTKRVYQDTRATHNLDKLNTELQDVTRVMTKNIEDLLHRGHSLDHMSDLSSNLRTESKKYRRAAQRINWEAMIRQYIPFIGVGLIGLFMLWWMLF.

The Cytoplasmic segment spans residues 1-192 (MVLSTLIMRA…QRINWEAMIR (192 aa)). One can recognise a Longin domain in the interval 6–117 (LIMRASDGLP…YKFVEFDTFM (112 aa)). The v-SNARE coiled-coil homology domain maps to 132-192 (NLDKLNTELQ…QRINWEAMIR (61 aa)). Residues 193 to 213 (QYIPFIGVGLIGLFMLWWMLF) form a helical; Anchor for type IV membrane protein membrane-spanning segment.

Belongs to the synaptobrevin family.

It localises to the membrane. Its subcellular location is the endoplasmic reticulum membrane. It is found in the golgi apparatus membrane. Functionally, required for transport from the ER to the Golgi complex. This is Protein transport protein SEC22 (SEC22) from Yarrowia lipolytica (strain CLIB 122 / E 150) (Yeast).